Reading from the N-terminus, the 48-residue chain is MRIKINLQCSHCGSKNYLTSKNKKNHPEKIQVPKYCPKERKVTLHIES.

It belongs to the bacterial ribosomal protein bL33 family.

The sequence is that of Large ribosomal subunit protein bL33 from Streptococcus mutans serotype c (strain ATCC 700610 / UA159).